Consider the following 410-residue polypeptide: Class E basic helix-loop-helix protein 41 (410 aa).

Lys-31 is covalently cross-linked (Glycyl lysine isopeptide (Lys-Gly) (interchain with G-Cter in SUMO2)). The bHLH domain occupies 44–99 (TYKLPHRLIEKKRRDRINECIAQLKDLLPEHLKLTTLGHLEKAVVLELTLKHLKAL). Lys-121 participates in a covalent cross-link: Glycyl lysine isopeptide (Lys-Gly) (interchain with G-Cter in SUMO2). An Orange domain is found at 131–166 (FHSGFQTCAKEVLQYLARFESWTPREPRCAQLVSHL). Disordered regions lie at residues 209–255 (IQRT…KRPK) and 360–410 (GATA…KDAP). Lys-240 participates in a covalent cross-link: Glycyl lysine isopeptide (Lys-Gly) (interchain with G-Cter in SUMO2).

As to quaternary structure, homodimer. Heterodimer with BHLHE40/DEC1. Interacts with CIART. Interacts with BMAL1. Interacts with RXRA. Interacts with NR0B2 and HNF1A. Expressed in skeletal muscle, brain and lung.

It localises to the nucleus. In terms of biological role, transcriptional repressor involved in the regulation of the circadian rhythm by negatively regulating the activity of the clock genes and clock-controlled genes. Acts as the negative limb of a novel autoregulatory feedback loop (DEC loop) which differs from the one formed by the PER and CRY transcriptional repressors (PER/CRY loop). Both these loops are interlocked as it represses the expression of PER1 and in turn is repressed by PER1/2 and CRY1/2. Represses the activity of the circadian transcriptional activator: CLOCK-BMAL1 heterodimer by competing for the binding to E-box elements (5'-CACGTG-3') found within the promoters of its target genes. Negatively regulates its own expression and the expression of DBP and BHLHE41/DEC2. Acts as a corepressor of RXR and the RXR-LXR heterodimers and represses the ligand-induced RXRA/B/G, NR1H3/LXRA, NR1H4 and VDR transactivation activity. Inhibits HNF1A-mediated transactivation of CYP1A2, CYP2E1 and CYP3A11. The polypeptide is Class E basic helix-loop-helix protein 41 (Bhlhe41) (Mus musculus (Mouse)).